We begin with the raw amino-acid sequence, 269 residues long: Probable molybdenum ABC transporter permease protein HVO_B0370 (269 aa).

The next 6 membrane-spanning stretches (helical) occupy residues 26-46, 69-89, 100-120, 140-160, 198-218, and 243-263; these read LLLA…LVFA, VVAA…LAYW, VILA…GMLL, SLFG…VVTA, ILAG…ATLM, and FPVA…VHAL. Residues 65–258 form the ABC transmembrane type-1 domain; it reads ATNSVVAATL…LVGIAVGAIL (194 aa).

The protein belongs to the binding-protein-dependent transport system permease family. As to quaternary structure, the complex is composed of two ATP-binding proteins, two transmembrane proteins (HVO_B0370) and a solute-binding protein (HVO_B0369).

The protein localises to the cell membrane. Its function is as follows. Part of an ABC transporter complex involved in molybdenum import. Responsible for the translocation of the substrate across the membrane. The polypeptide is Probable molybdenum ABC transporter permease protein HVO_B0370 (Haloferax volcanii (strain ATCC 29605 / DSM 3757 / JCM 8879 / NBRC 14742 / NCIMB 2012 / VKM B-1768 / DS2) (Halobacterium volcanii)).